The chain runs to 129 residues: Protein Turandot A (129 aa).

The N-terminal stretch at 1–21 is a signal peptide; sequence MNSSTALMCFALLLISPLCMG. Asn49 carries an N-linked (GlcNAc...) asparagine glycan.

It belongs to the Turandot family. As to expression, expressed in the fat body (at protein level).

Its subcellular location is the secreted. Functionally, a humoral factor that plays a role in stress tolerance; gives increased resistance to the lethal effects of bacterial challenge and stress. Regulated by the JAK/STAT pathway and NF-KB-like Relish pathway in the fat body, upd3 in the hemocytes and Mekk1 in response to septic injury and consequent immune response. The polypeptide is Protein Turandot A (Drosophila melanogaster (Fruit fly)).